The following is a 212-amino-acid chain: ER lumen protein-retaining receptor 2 (212 aa).

The Lumenal portion of the chain corresponds to 1-4; it reads MNIF. Residues 5–24 traverse the membrane as a helical segment; sequence RLTGDLSHLAAIIILLLKIW. The Cytoplasmic segment spans residues 25 to 32; sequence KSRSCAGI. Residues 33-52 traverse the membrane as a helical segment; the sequence is SGKSQILFALVFTTRYLDLL. The interaction with the K-D-E-L motif on target proteins stretch occupies residues 47 to 48; the sequence is RY. The Lumenal portion of the chain corresponds to 53 to 58; sequence TSFISL. The helical transmembrane segment at 59 to 79 threads the bilayer; it reads YNTCMKVIYIGCAYATVYLIY. Residues 80–92 are Cytoplasmic-facing; sequence AKFRATYDGNHDT. The chain crosses the membrane as a helical span at residues 93–110; it reads FRAEFLVVPVGGLAFLVN. Residues 111-116 are Lumenal-facing; it reads HDFSPL. A helical membrane pass occupies residues 117–135; sequence EILWTFSIYLESVAILPQL. The Cytoplasmic portion of the chain corresponds to 136 to 149; sequence FMISKTGEAETITT. Residues 150-168 traverse the membrane as a helical segment; sequence HYLFCLGVYRALYLFNWIW. The segment at 159-169 is interaction with the K-D-E-L motif on target proteins; sequence RALYLFNWIWR. Residues 169-178 lie on the Lumenal side of the membrane; it reads RFYFEGFFDM. The chain crosses the membrane as a helical span at residues 179–199; that stretch reads IAIVAGVVQTILYCDFFYLYV. The Cytoplasmic portion of the chain corresponds to 200–212; the sequence is TKVLKGKKLSLPA. The tract at residues 204–207 is important for recycling of cargo proteins with the sequence motif K-D-E-L from the Golgi to the endoplasmic reticulum; it reads KGKK.

This sequence belongs to the ERD2 family.

The protein localises to the endoplasmic reticulum membrane. It is found in the golgi apparatus membrane. Its subcellular location is the cytoplasmic vesicle. The protein resides in the COPI-coated vesicle membrane. Functionally, receptor for the C-terminal sequence motif K-D-E-L that is present on endoplasmic reticulum resident proteins and that mediates their recycling from the Golgi back to the endoplasmic reticulum. Binding is pH dependent, and is optimal at pH 5-5.4. The polypeptide is ER lumen protein-retaining receptor 2 (kdelr2) (Danio rerio (Zebrafish)).